The chain runs to 107 residues: Small leucine-rich protein 1 (107 aa).

2 helical membrane passes run 19–39 (AALV…LAMS) and 53–73 (FLFF…IAYF). The tract at residues 85 to 107 (SQNCDRQHNPKDGSSLYQRMKWT) is disordered.

The protein localises to the membrane. The chain is Small leucine-rich protein 1 (SMLR1) from Homo sapiens (Human).